A 28-amino-acid polypeptide reads, in one-letter code: Ornatin-D (28 aa).

This sequence belongs to the ornatin family.

The protein localises to the secreted. Functionally, potent inhibitor of fibrinogen interaction with platelet receptors expressed on glycoprotein IIb-IIIa complex. May prevent blood from clotting during either feeding and/or storage of ingested blood. The sequence is that of Ornatin-D from Placobdella ornata (Turtle leech).